A 524-amino-acid chain; its full sequence is Bifunctional purine biosynthesis protein PurH (524 aa).

In terms of domain architecture, MGS-like spans Met1 to Thr149.

The protein belongs to the PurH family.

It carries out the reaction (6R)-10-formyltetrahydrofolate + 5-amino-1-(5-phospho-beta-D-ribosyl)imidazole-4-carboxamide = 5-formamido-1-(5-phospho-D-ribosyl)imidazole-4-carboxamide + (6S)-5,6,7,8-tetrahydrofolate. The catalysed reaction is IMP + H2O = 5-formamido-1-(5-phospho-D-ribosyl)imidazole-4-carboxamide. The protein operates within purine metabolism; IMP biosynthesis via de novo pathway; 5-formamido-1-(5-phospho-D-ribosyl)imidazole-4-carboxamide from 5-amino-1-(5-phospho-D-ribosyl)imidazole-4-carboxamide (10-formyl THF route): step 1/1. It participates in purine metabolism; IMP biosynthesis via de novo pathway; IMP from 5-formamido-1-(5-phospho-D-ribosyl)imidazole-4-carboxamide: step 1/1. The sequence is that of Bifunctional purine biosynthesis protein PurH from Chlorobium phaeovibrioides (strain DSM 265 / 1930) (Prosthecochloris vibrioformis (strain DSM 265)).